Here is a 351-residue protein sequence, read N- to C-terminus: uncharacterized protein (351 aa).

Residues 1–27 (MKNKKRVLIASSLSCAILLLSAATTQA) form the signal peptide. Positions 29–71 (SAHKDSQDQNKKEHVDKSQQKDKRNVTNKDKNSTVPDDIGKNG) are disordered. Residues 30–60 (AHKDSQDQNKKEHVDKSQQKDKRNVTNKDKN) are compositionally biased toward basic and acidic residues.

This sequence belongs to the aerolysin family.

This is an uncharacterized protein from Staphylococcus aureus (strain Mu50 / ATCC 700699).